We begin with the raw amino-acid sequence, 250 residues long: 3-deoxy-manno-octulosonate cytidylyltransferase (250 aa).

The protein belongs to the KdsB family.

It localises to the cytoplasm. The catalysed reaction is 3-deoxy-alpha-D-manno-oct-2-ulosonate + CTP = CMP-3-deoxy-beta-D-manno-octulosonate + diphosphate. The protein operates within nucleotide-sugar biosynthesis; CMP-3-deoxy-D-manno-octulosonate biosynthesis; CMP-3-deoxy-D-manno-octulosonate from 3-deoxy-D-manno-octulosonate and CTP: step 1/1. It functions in the pathway bacterial outer membrane biogenesis; lipopolysaccharide biosynthesis. Its function is as follows. Activates KDO (a required 8-carbon sugar) for incorporation into bacterial lipopolysaccharide in Gram-negative bacteria. The sequence is that of 3-deoxy-manno-octulosonate cytidylyltransferase from Legionella pneumophila (strain Lens).